Here is a 239-residue protein sequence, read N- to C-terminus: MAGHSKWANIQHRKGRQDEKRGKIWTRIIREITVAARAGGGDVSANPRLRLAIDKAKAANMPADRIKYNIDKATGNAEGLTYEEIRYEGYGIGGAAIIVDTMTDNRVRTVAEVRHAFSKYGGNMGTEGSVAFQFKHVGQLIFAPGTSEDKVMEVALEAGAEDVVTDEDGAIEVLTAPGDFEAVKNALEAAGLTPDAADVTMRPDVTIDLAGEDAERMQKLLDVIEDLDDVQEVYHNAAL.

The disordered stretch occupies residues 1-20 (MAGHSKWANIQHRKGRQDEK).

The protein belongs to the TACO1 family.

Its subcellular location is the cytoplasm. This chain is Probable transcriptional regulatory protein Aave_3203, found in Paracidovorax citrulli (strain AAC00-1) (Acidovorax citrulli).